We begin with the raw amino-acid sequence, 279 residues long: Protein COP1 SUPPRESSOR 2 (279 aa).

Disordered stretches follow at residues 1–29 (MPPK…ISEE) and 57–79 (SSTA…EGEK). The segment covering 68–79 (KPVEKTETEGEK) has biased composition (basic and acidic residues). The stretch at 86-183 (DTFAQETAVL…EETEAAKKLL (98 aa)) forms a coiled coil. Positions 217–229 (LRREHPELYKDRG) are enriched in basic and acidic residues. The disordered stretch occupies residues 217-279 (LRREHPELYK…KRERNRVMRR (63 aa)). A compositionally biased stretch (polar residues) spans 250–260 (ADSGKSRQAAT). Positions 270 to 279 (KRERNRVMRR) are enriched in basic residues.

This sequence belongs to the TLS1 family. In terms of assembly, interacts with COP1.

The protein resides in the nucleus. It is found in the nucleus speckle. Inhibits E3 ubiquitin-protein ligase activity of COP1, a central repressor of seedling photomorphogenesis. Represses COP1-mediated turnover of HY5 in the dark. Required for primary root development under normal light growth conditions. The chain is Protein COP1 SUPPRESSOR 2 from Arabidopsis thaliana (Mouse-ear cress).